The following is a 304-amino-acid chain: Developmental pluripotency-associated protein 4 (304 aa).

A compositionally biased stretch (polar residues) spans 1–11 (MLRGSASSTSM). 2 disordered regions span residues 1 to 84 (MLRG…IPPL) and 147 to 176 (KKLKVEKGETSLQSSETHPPEVALPPVGEP). Residues 12–29 (EKAKGKEWTSTEKSREED) are compositionally biased toward basic and acidic residues. Thr-215 is subject to Phosphothreonine. A phosphoserine mark is found at Ser-221 and Ser-226.

In terms of assembly, interacts with DPPA2. Interacts with PCGF1.

It is found in the nucleus. Its function is as follows. May be involved in the maintenance of active epigenetic status of target genes. May inhibit differentiation of embryonic cells into a primitive ectoderm lineage. The sequence is that of Developmental pluripotency-associated protein 4 (DPPA4) from Homo sapiens (Human).